The following is a 134-amino-acid chain: MASEKKVLGFEEVSQHNKTKDCWLIISGKVYDVTPFMDDHPGGDEVLLSSTGKDATNDFEDVGHSDTARDMMEKYYIGEIDSSTVPATRTYVAPVQPAYNQDKTPEFMIKILQFLVPILILGLALVVRQYTKKE.

Residues 5–81 (KKVLGFEEVS…MEKYYIGEID (77 aa)) form the Cytochrome b5 heme-binding domain. Residues histidine 40 and histidine 64 each contribute to the heme site. A helical transmembrane segment spans residues 107–127 (FMIKILQFLVPILILGLALVV).

Belongs to the cytochrome b5 family.

Its subcellular location is the endoplasmic reticulum membrane. It localises to the microsome membrane. In terms of biological role, membrane bound hemoprotein which function as an electron carrier for several membrane bound oxygenases. This chain is Cytochrome b5 (CYB5), found in Brassica oleracea var. botrytis (Cauliflower).